Reading from the N-terminus, the 802-residue chain is Ribosomal protein S6 kinase alpha-5 (802 aa).

Over residues 1 to 22 (MEEEGGSSGGAAGTSADGGDGG) the composition is skewed to gly residues. The disordered stretch occupies residues 1–23 (MEEEGGSSGGAAGTSADGGDGGE). Residues 49–318 (FELLKVLGTG…ADEIKEHLFF (270 aa)) form the Protein kinase 1 domain. ATP contacts are provided by residues 55-63 (LGTGAYGKV) and Lys81. Asp177 functions as the Proton acceptor in the catalytic mechanism. Residue Ser212 is modified to Phosphoserine; by autocatalysis. The region spanning 319 to 387 (QKINWDDLAA…VAPSILFKRN (69 aa)) is the AGC-kinase C-terminal domain. At Ser360 the chain carries Phosphoserine; by MAPK1, MAPK3 and MAPK14. 2 positions are modified to phosphoserine; by autocatalysis: Ser376 and Ser381. Residues 426–687 (DLKDKPLGEG…MSGLRYNEWL (262 aa)) form the Protein kinase 2 domain. Residues 432–440 (LGEGSFSIC) and Lys455 each bind ATP. The Proton acceptor role is filled by Asp544. A Phosphothreonine; by MAPK1, MAPK3 and MAPK14 modification is found at Thr581. 4 positions are modified to phosphoserine: Ser647, Ser657, Ser691, and Ser695. At Thr700 the chain carries Phosphothreonine; by MAPK1, MAPK3 and MAPK14. The tract at residues 741–802 (AKRRKMKKTS…TLFQFSDSVA (62 aa)) is disordered. A compositionally biased stretch (low complexity) spans 749-779 (TSTSTETRSSSSESSHSSSSHSHGKTTPTKT). 3 positions are modified to phosphoserine; by autocatalysis: Ser750, Ser752, and Ser758. Polar residues predominate over residues 780-802 (LQPSNPADSNNPETLFQFSDSVA). Residue Ser798 is modified to Phosphoserine.

The protein belongs to the protein kinase superfamily. AGC Ser/Thr protein kinase family. S6 kinase subfamily. Forms a complex with either MAPK1/ERK2 or MAPK3/ERK1 in quiescent cells which transiently dissociates following mitogenic stimulation. Also associates with MAPK14/p38-alpha. Activated RPS6KA5 associates with and phosphorylates the NF-kappa-B p65 subunit RELA. Interacts with CREBBP and EP300. Requires Mg(2+) as cofactor. Ser-376 and Thr-581 phosphorylation is required for kinase activity. Ser-376 and Ser-212 are autophosphorylated by the C-terminal kinase domain, and their phosphorylation is essential for the catalytic activity of the N-terminal kinase domain. Phosphorylated at Ser-360, Thr-581 and Thr-700 by MAPK1/ERK2, MAPK3/ERK1 and MAPK14/p38-alpha. Autophosphorylated at Ser-750, Ser-752 and Ser-758 by the N-terminal kinase domain. In terms of processing, ubiquitinated. As to expression, widely expressed with high levels in heart, brain and placenta. Less abundant in lung, kidney and liver.

The protein localises to the nucleus. It is found in the cytoplasm. The enzyme catalyses L-seryl-[protein] + ATP = O-phospho-L-seryl-[protein] + ADP + H(+). It carries out the reaction L-threonyl-[protein] + ATP = O-phospho-L-threonyl-[protein] + ADP + H(+). Its activity is regulated as follows. Activated by phosphorylation at Ser-360, Thr-581 and Thr-700 by MAPK1/ERK2, MAPK3/ERK1 and MAPK14/p38-alpha, and by further autophosphorylation of Ser-212, Ser-376 and Ser-381 by the activated C-terminal kinase domain. The active N-terminal kinase domain finally phosphorylates downstream substrates, as well as Ser-750, Ser-752 and Ser-758 in its own C-terminal region. Its function is as follows. Serine/threonine-protein kinase that is required for the mitogen or stress-induced phosphorylation of the transcription factors CREB1 and ATF1 and for the regulation of the transcription factors RELA, STAT3 and ETV1/ER81, and that contributes to gene activation by histone phosphorylation and functions in the regulation of inflammatory genes. Phosphorylates CREB1 and ATF1 in response to mitogenic or stress stimuli such as UV-C irradiation, epidermal growth factor (EGF) and anisomycin. Plays an essential role in the control of RELA transcriptional activity in response to TNF and upon glucocorticoid, associates in the cytoplasm with the glucocorticoid receptor NR3C1 and contributes to RELA inhibition and repression of inflammatory gene expression. In skeletal myoblasts is required for phosphorylation of RELA at 'Ser-276' during oxidative stress. In erythropoietin-stimulated cells, is necessary for the 'Ser-727' phosphorylation of STAT3 and regulation of its transcriptional potential. Phosphorylates ETV1/ER81 at 'Ser-191' and 'Ser-216', and thereby regulates its ability to stimulate transcription, which may be important during development and breast tumor formation. Directly represses transcription via phosphorylation of 'Ser-1' of histone H2A. Phosphorylates 'Ser-10' of histone H3 in response to mitogenics, stress stimuli and EGF, which results in the transcriptional activation of several immediate early genes, including proto-oncogenes c-fos/FOS and c-jun/JUN. May also phosphorylate 'Ser-28' of histone H3. Mediates the mitogen- and stress-induced phosphorylation of high mobility group protein 1 (HMGN1/HMG14). In lipopolysaccharide-stimulated primary macrophages, acts downstream of the Toll-like receptor TLR4 to limit the production of pro-inflammatory cytokines. Functions probably by inducing transcription of the MAP kinase phosphatase DUSP1 and the anti-inflammatory cytokine interleukin 10 (IL10), via CREB1 and ATF1 transcription factors. Plays a role in neuronal cell death by mediating the downstream effects of excitotoxic injury. Phosphorylates TRIM7 at 'Ser-107' in response to growth factor signaling via the MEK/ERK pathway, thereby stimulating its ubiquitin ligase activity. This is Ribosomal protein S6 kinase alpha-5 (RPS6KA5) from Homo sapiens (Human).